Here is a 375-residue protein sequence, read N- to C-terminus: 23S rRNA (uracil(747)-C(5))-methyltransferase RlmC (375 aa).

Positions 3, 11, 14, and 87 each coordinate [4Fe-4S] cluster. 4 residues coordinate S-adenosyl-L-methionine: Gln-212, Phe-241, Glu-262, and Asn-307. Catalysis depends on Cys-334, which acts as the Nucleophile.

This sequence belongs to the class I-like SAM-binding methyltransferase superfamily. RNA M5U methyltransferase family. RlmC subfamily.

The enzyme catalyses uridine(747) in 23S rRNA + S-adenosyl-L-methionine = 5-methyluridine(747) in 23S rRNA + S-adenosyl-L-homocysteine + H(+). Catalyzes the formation of 5-methyl-uridine at position 747 (m5U747) in 23S rRNA. This is 23S rRNA (uracil(747)-C(5))-methyltransferase RlmC from Salmonella enteritidis PT4 (strain P125109).